We begin with the raw amino-acid sequence, 185 residues long: Photosystem I assembly protein Ycf4 (185 aa).

The next 2 helical transmembrane spans lie at glycine 20 to alanine 40 and isoleucine 57 to serine 77.

It belongs to the Ycf4 family.

It is found in the plastid. The protein localises to the chloroplast thylakoid membrane. Functionally, seems to be required for the assembly of the photosystem I complex. This Sorghum bicolor (Sorghum) protein is Photosystem I assembly protein Ycf4.